The sequence spans 503 residues: Probable cytosol aminopeptidase (503 aa).

Mn(2+) contacts are provided by K270 and D275. The active site involves K282. 3 residues coordinate Mn(2+): D293, D352, and E354. R356 is an active-site residue.

The protein belongs to the peptidase M17 family. It depends on Mn(2+) as a cofactor.

The protein localises to the cytoplasm. The catalysed reaction is Release of an N-terminal amino acid, Xaa-|-Yaa-, in which Xaa is preferably Leu, but may be other amino acids including Pro although not Arg or Lys, and Yaa may be Pro. Amino acid amides and methyl esters are also readily hydrolyzed, but rates on arylamides are exceedingly low.. It carries out the reaction Release of an N-terminal amino acid, preferentially leucine, but not glutamic or aspartic acids.. Its function is as follows. Presumably involved in the processing and regular turnover of intracellular proteins. Catalyzes the removal of unsubstituted N-terminal amino acids from various peptides. The sequence is that of Probable cytosol aminopeptidase from Shigella boydii serotype 18 (strain CDC 3083-94 / BS512).